A 265-amino-acid polypeptide reads, in one-letter code: Type 1 encapsulin shell protein (265 aa).

Residues 79–81 (RAT), Trp-87, and 90–94 (DNLER) contribute to the FMN site. The segment at 184–189 (EAGHYP) is pore-forming loop. Glu-235 contacts FMN.

Belongs to the encapsulin family. Family 1 subfamily. In terms of assembly, homomultimeric. This encapsulin nanocompartment is formed by 60 subunits; monomers form 12 pentamers which assemble to form shells. There are 12 pores where the pentamers meet as well as 3-fold axis channels and dimer channels; none are larger than 3-4 Angstroms in diameter. The N-terminus of the protein is inside the shell, the C-terminus is outside. Probably 3, 4 or 5 Flp cargo decamers bind inside the encapulin nanocompartment. It depends on FMN as a cofactor.

The protein localises to the encapsulin nanocompartment. Its activity is regulated as follows. Proteolysis activated by calcium and cobalt. Its function is as follows. Shell component of a type 1 encapsulin nanocompartment. Assembles into proteinaceous shells 23-24 nm in diameter with 2-2.5 nm thick walls. Cargo protein Flp (ferritin-like protein, probably stores iron) is targeted to the interior via its C-terminal extension; empty intact shells can be isolated in the absence of cargo protein. Fe(2+) may be able to pass though the 5-fold and dimer channels in the protein shell. Functionally, protease that exhibits activity toward chymotrypsin and trypsin substrates. Probably does not have antibacterial activity. The polypeptide is Type 1 encapsulin shell protein (Thermotoga maritima (strain ATCC 43589 / DSM 3109 / JCM 10099 / NBRC 100826 / MSB8)).